A 54-amino-acid polypeptide reads, in one-letter code: Hydrophobic protein RCI2A (54 aa).

2 helical membrane passes run 2 to 22 (STATFVDIIIAILLPPLGVFL) and 32 to 52 (ICLVLTLLGYIPGIIYAIYVL).

Belongs to the UPF0057 (PMP3) family.

It is found in the membrane. This Arabidopsis thaliana (Mouse-ear cress) protein is Hydrophobic protein RCI2A (RCI2A).